The chain runs to 944 residues: Protein translocase subunit SecA (944 aa).

Residues Q96, 114 to 118, and D554 each bind ATP; that span reads GEGKT.

This sequence belongs to the SecA family. As to quaternary structure, monomer and homodimer. Part of the essential Sec protein translocation apparatus which comprises SecA, SecYEG and auxiliary proteins SecDF. Other proteins may also be involved.

It is found in the cell inner membrane. The protein localises to the cytoplasm. The enzyme catalyses ATP + H2O + cellular proteinSide 1 = ADP + phosphate + cellular proteinSide 2.. Part of the Sec protein translocase complex. Interacts with the SecYEG preprotein conducting channel. Has a central role in coupling the hydrolysis of ATP to the transfer of proteins into and across the cell membrane, serving as an ATP-driven molecular motor driving the stepwise translocation of polypeptide chains across the membrane. The polypeptide is Protein translocase subunit SecA (Hydrogenobaculum sp. (strain Y04AAS1)).